The chain runs to 426 residues: Cytochrome c biogenesis protein CcsB (426 aa).

A run of 3 helical transmembrane segments spans residues L14–I34, S72–R92, and L162–S182.

Belongs to the Ccs1/CcsB family. May interact with CcsA.

It localises to the cellular thylakoid membrane. Its function is as follows. Required during biogenesis of c-type cytochromes (cytochrome c6 and cytochrome f) at the step of heme attachment. This is Cytochrome c biogenesis protein CcsB from Prochlorococcus marinus (strain NATL2A).